The following is a 371-amino-acid chain: tRNA-specific 2-thiouridylase MnmA (371 aa).

ATP contacts are provided by residues 22–29 (GLSGGVDS) and M48. The segment at 108 to 110 (NPD) is interaction with target base in tRNA. C113 functions as the Nucleophile in the catalytic mechanism. C113 and C209 form a disulfide bridge. G137 lines the ATP pocket. An interaction with tRNA region spans residues 159-161 (KDQ). Residue C209 is the Cysteine persulfide intermediate of the active site.

It belongs to the MnmA/TRMU family.

The protein resides in the cytoplasm. It carries out the reaction S-sulfanyl-L-cysteinyl-[protein] + uridine(34) in tRNA + AH2 + ATP = 2-thiouridine(34) in tRNA + L-cysteinyl-[protein] + A + AMP + diphosphate + H(+). Functionally, catalyzes the 2-thiolation of uridine at the wobble position (U34) of tRNA, leading to the formation of s(2)U34. The chain is tRNA-specific 2-thiouridylase MnmA from Coxiella burnetii (strain CbuK_Q154) (Coxiella burnetii (strain Q154)).